We begin with the raw amino-acid sequence, 572 residues long: Sulfite reductase [NADPH] hemoprotein beta-component (572 aa).

[4Fe-4S] cluster contacts are provided by Cys437, Cys443, Cys482, and Cys486. Cys486 contributes to the siroheme binding site.

Belongs to the nitrite and sulfite reductase 4Fe-4S domain family. As to quaternary structure, alpha(8)-beta(8). The alpha component is a flavoprotein, the beta component is a hemoprotein. Siroheme serves as cofactor. It depends on [4Fe-4S] cluster as a cofactor.

The catalysed reaction is hydrogen sulfide + 3 NADP(+) + 3 H2O = sulfite + 3 NADPH + 4 H(+). Its pathway is sulfur metabolism; hydrogen sulfide biosynthesis; hydrogen sulfide from sulfite (NADPH route): step 1/1. Functionally, component of the sulfite reductase complex that catalyzes the 6-electron reduction of sulfite to sulfide. This is one of several activities required for the biosynthesis of L-cysteine from sulfate. The protein is Sulfite reductase [NADPH] hemoprotein beta-component of Bacillus licheniformis (strain ATCC 14580 / DSM 13 / JCM 2505 / CCUG 7422 / NBRC 12200 / NCIMB 9375 / NCTC 10341 / NRRL NRS-1264 / Gibson 46).